The following is a 498-amino-acid chain: ATP synthase subunit beta, chloroplastic (498 aa).

ATP is bound at residue 172 to 179 (GGAGVGKT).

This sequence belongs to the ATPase alpha/beta chains family. F-type ATPases have 2 components, CF(1) - the catalytic core - and CF(0) - the membrane proton channel. CF(1) has five subunits: alpha(3), beta(3), gamma(1), delta(1), epsilon(1). CF(0) has four main subunits: a(1), b(1), b'(1) and c(9-12).

It is found in the plastid. It localises to the chloroplast thylakoid membrane. The catalysed reaction is ATP + H2O + 4 H(+)(in) = ADP + phosphate + 5 H(+)(out). Its function is as follows. Produces ATP from ADP in the presence of a proton gradient across the membrane. The catalytic sites are hosted primarily by the beta subunits. This is ATP synthase subunit beta, chloroplastic from Illicium oligandrum (Star anise).